The primary structure comprises 196 residues: DNA replication complex GINS protein PSF1 (196 aa).

This sequence belongs to the GINS1/PSF1 family. In terms of assembly, component of the GINS complex which is a heterotetramer of gins1/psf1, gins2/psf2, gins3/psf3 and gins4/sld5. Component of the CMG helicase complex, composed of the mcm2-7 complex, the GINS complex and cdc45.

It is found in the nucleus. Its subcellular location is the chromosome. Functionally, required for correct functioning of the GINS complex, a complex that plays an essential role in the initiation of DNA replication, and progression of DNA replication forks. GINS complex is a core component of CDC45-MCM-GINS (CMG) helicase, the molecular machine that unwinds template DNA during replication, and around which the replisome is built. The sequence is that of DNA replication complex GINS protein PSF1 from Xenopus laevis (African clawed frog).